Here is a 334-residue protein sequence, read N- to C-terminus: Fe-S cluster assembly protein DRE2 (334 aa).

An N-terminal SAM-like domain region spans residues 1 to 131 (MASTKTGLVL…ASIKAEPVAV (131 aa)). A linker region spans residues 132–228 (PLRNHKKTTT…EDELVDENEM (97 aa)). The tract at residues 135 to 229 (NHKKTTTPGT…DELVDENEMR (95 aa)) is disordered. Low complexity predominate over residues 140–150 (TTPGTTTTAKK). 2 stretches are compositionally biased toward acidic residues: residues 182-192 (DSEDEDEESEG) and 215-227 (DSIEEDELVDENE). 4 residues coordinate [2Fe-2S] cluster: Cys238, Cys249, Cys252, and Cys254. A fe-S binding site A region spans residues 238-254 (CGKSKTRRRKACKDCTC). 4 residues coordinate [4Fe-4S] cluster: Cys297, Cys300, Cys308, and Cys311. 2 short sequence motifs (cx2C motif) span residues 297–300 (CGSC) and 308–311 (CSGC). The fe-S binding site B stretch occupies residues 297 to 311 (CGSCTLGDAFRCSGC).

The protein belongs to the anamorsin family. Monomer. Interacts with TAH18. Interacts with MIA40. It depends on [2Fe-2S] cluster as a cofactor. The cofactor is [4Fe-4S] cluster.

Its subcellular location is the cytoplasm. It is found in the mitochondrion intermembrane space. Functionally, component of the cytosolic iron-sulfur (Fe-S) protein assembly (CIA) machinery required for the maturation of extramitochondrial Fe-S proteins. Part of an electron transfer chain functioning in an early step of cytosolic Fe-S biogenesis, facilitating the de novo assembly of a [4Fe-4S] cluster on the scaffold complex CFD1-NBP35. Electrons are transferred to DRE2 from NADPH via the FAD- and FMN-containing protein TAH18. TAH18-DRE2 are also required for the assembly of the diferric tyrosyl radical cofactor of ribonucleotide reductase (RNR), probably by providing electrons for reduction during radical cofactor maturation in the catalytic small subunit RNR2. The polypeptide is Fe-S cluster assembly protein DRE2 (Zygosaccharomyces rouxii (strain ATCC 2623 / CBS 732 / NBRC 1130 / NCYC 568 / NRRL Y-229)).